The primary structure comprises 959 residues: Isoleucine--tRNA ligase (959 aa).

A 'HIGH' region motif is present at residues 60 to 70; that stretch reads PYANGSLHIGH. Glutamate 571 lines the L-isoleucyl-5'-AMP pocket. The short motif at 612–616 is the 'KMSKS' region element; the sequence is KMSKS. Residue lysine 615 coordinates ATP. Positions 928, 931, 948, and 951 each coordinate Zn(2+).

It belongs to the class-I aminoacyl-tRNA synthetase family. IleS type 1 subfamily. As to quaternary structure, monomer. Requires Zn(2+) as cofactor.

The protein resides in the cytoplasm. It catalyses the reaction tRNA(Ile) + L-isoleucine + ATP = L-isoleucyl-tRNA(Ile) + AMP + diphosphate. In terms of biological role, catalyzes the attachment of isoleucine to tRNA(Ile). As IleRS can inadvertently accommodate and process structurally similar amino acids such as valine, to avoid such errors it has two additional distinct tRNA(Ile)-dependent editing activities. One activity is designated as 'pretransfer' editing and involves the hydrolysis of activated Val-AMP. The other activity is designated 'posttransfer' editing and involves deacylation of mischarged Val-tRNA(Ile). The polypeptide is Isoleucine--tRNA ligase (Nostoc punctiforme (strain ATCC 29133 / PCC 73102)).